The chain runs to 228 residues: Auxin-responsive protein IAA16 (228 aa).

Residues 19 to 23 (LSLAL) carry the EAR-like (transcriptional repression) motif. Over residues 28 to 39 (SSSGLQGNTSTA) the composition is skewed to polar residues. Disordered regions lie at residues 28–57 (SSSGLQGNTSTAADGAKGNDGFKASRPAAP) and 70–90 (NLASSSSSSKPPRGGRDAAAA). The PB1 domain maps to 97-214 (ARFVKVNMDG…RVLRSSDLNA (118 aa)).

This sequence belongs to the Aux/IAA family. In terms of assembly, homodimers and heterodimers. As to expression, expressed in roots, flowers and seedlings.

It localises to the nucleus. Functionally, aux/IAA proteins are short-lived transcriptional factors that function as repressors of early auxin response genes at low auxin concentrations. The polypeptide is Auxin-responsive protein IAA16 (IAA16) (Oryza sativa subsp. japonica (Rice)).